The chain runs to 429 residues: Multifunctional CCA protein (429 aa).

Gly-27 and Arg-30 together coordinate ATP. CTP contacts are provided by Gly-27 and Arg-30. Mg(2+) is bound by residues Asp-40 and Asp-42. Residues Arg-110, Arg-162, and Arg-165 each coordinate ATP. Positions 110, 162, and 165 each coordinate CTP. The HD domain maps to 251–352; the sequence is TGVHTMMVVD…VRLLERCDAL (102 aa).

The protein belongs to the tRNA nucleotidyltransferase/poly(A) polymerase family. Bacterial CCA-adding enzyme type 1 subfamily. Monomer. Can also form homodimers and oligomers. Mg(2+) is required as a cofactor. It depends on Ni(2+) as a cofactor.

The enzyme catalyses a tRNA precursor + 2 CTP + ATP = a tRNA with a 3' CCA end + 3 diphosphate. The catalysed reaction is a tRNA with a 3' CCA end + 2 CTP + ATP = a tRNA with a 3' CCACCA end + 3 diphosphate. In terms of biological role, catalyzes the addition and repair of the essential 3'-terminal CCA sequence in tRNAs without using a nucleic acid template. Adds these three nucleotides in the order of C, C, and A to the tRNA nucleotide-73, using CTP and ATP as substrates and producing inorganic pyrophosphate. tRNA 3'-terminal CCA addition is required both for tRNA processing and repair. Also involved in tRNA surveillance by mediating tandem CCA addition to generate a CCACCA at the 3' terminus of unstable tRNAs. While stable tRNAs receive only 3'-terminal CCA, unstable tRNAs are marked with CCACCA and rapidly degraded. The protein is Multifunctional CCA protein of Ralstonia nicotianae (strain ATCC BAA-1114 / GMI1000) (Ralstonia solanacearum).